Reading from the N-terminus, the 513-residue chain is Alanine--glyoxylate aminotransferase 2, mitochondrial (513 aa).

A mitochondrion-targeting transit peptide spans 1 to 40 (MSLAWRNLQKPFYLETSLRILQMRPSLSLGASRIAVPKLT). N6-acetyllysine is present on lysine 56. An N6-acetyllysine; alternate modification is found at lysine 70. Lysine 70 is subject to N6-succinyllysine; alternate. Lysine 83 bears the N6-acetyllysine mark. The residue at position 261 (lysine 261) is an N6-acetyllysine; alternate. At lysine 261 the chain carries N6-succinyllysine; alternate. At lysine 303 the chain carries N6-succinyllysine. Lysine 349 bears the N6-(pyridoxal phosphate)lysine mark. Residues lysine 416 and lysine 419 each carry the N6-acetyllysine; alternate modification. An N6-succinyllysine; alternate mark is found at lysine 416 and lysine 419. The residue at position 453 (lysine 453) is an N6-acetyllysine.

Belongs to the class-III pyridoxal-phosphate-dependent aminotransferase family. As to quaternary structure, homotetramer. It depends on pyridoxal 5'-phosphate as a cofactor. As to expression, expressed in the liver and kidney.

The protein localises to the mitochondrion. The catalysed reaction is glyoxylate + L-alanine = glycine + pyruvate. The enzyme catalyses (R)-3-amino-2-methylpropanoate + pyruvate = 2-methyl-3-oxopropanoate + L-alanine. It carries out the reaction 3-oxopropanoate + L-alanine = beta-alanine + pyruvate. It catalyses the reaction 2-oxobutanoate + L-alanine = (2S)-2-aminobutanoate + pyruvate. The catalysed reaction is N(omega),N(omega)-dimethyl-L-arginine + pyruvate = 5-(3,3-dimethylguanidino)-2-oxopentanoate + L-alanine. The enzyme catalyses N(omega),N('omega)-dimethyl-L-arginine + pyruvate = 5-(3,3'-dimethylguanidino)-2-oxopentanoate + L-alanine. It carries out the reaction N(omega),N(omega)-dimethyl-L-arginine + glyoxylate = 5-(3,3-dimethylguanidino)-2-oxopentanoate + glycine. It catalyses the reaction N(omega),N('omega)-dimethyl-L-arginine + glyoxylate = 5-(3,3'-dimethylguanidino)-2-oxopentanoate + glycine. The catalysed reaction is N(omega)-methyl-L-arginine + pyruvate = 5-(3-methylguanidino)-2-oxopentanoate + L-alanine. The enzyme catalyses N(omega)-methyl-L-arginine + glyoxylate = 5-(3-methylguanidino)-2-oxopentanoate + glycine. It carries out the reaction L-ornithine + pyruvate = 5-amino-2-oxopentanoate + L-alanine. It catalyses the reaction L-ornithine + glyoxylate = 5-amino-2-oxopentanoate + glycine. The catalysed reaction is (2S)-2-aminobutanoate + glyoxylate = 2-oxobutanoate + glycine. The enzyme catalyses N(omega),N(omega)-dimethyl-L-arginine + oxaloacetate = 5-(3,3-dimethylguanidino)-2-oxopentanoate + L-aspartate. It carries out the reaction oxaloacetate + L-alanine = L-aspartate + pyruvate. It catalyses the reaction N(omega),N(omega)-dimethyl-L-arginine + 2-oxobutanoate = 5-(3,3-dimethylguanidino)-2-oxopentanoate + (2S)-2-aminobutanoate. The catalysed reaction is 2-oxopentanoate + N(omega),N(omega)-dimethyl-L-arginine = 5-(3,3-dimethylguanidino)-2-oxopentanoate + L-2-aminopentanoate. The enzyme catalyses 2-oxohexanoate + N(omega),N(omega)-dimethyl-L-arginine = L-2-aminohexanoate + 5-(3,3-dimethylguanidino)-2-oxopentanoate. With respect to regulation, (R)-3-amino-2-methylpropionate--pyruvate transaminase and beta-alanine-pyruvate aminotransferase are inhibited by aminooxyacetic acid. Functionally, multifunctional aminotransferase with a broad substrate specificity. Catalyzes the conversion of glyoxylate to glycine using alanine as the amino donor. Catalyzes metabolism of not L- but the D-isomer of D-beta-aminoisobutyric acid to generate 2-methyl-3-oxopropanoate and alanine. Catalyzes the transfer of the amino group from beta-alanine to pyruvate to yield L-alanine and 3-oxopropanoate. Can metabolize NG-monomethyl-L-arginine (NMMA), asymmetric NG,NG-dimethyl-L-arginine (ADMA) and symmetric NG,N'G-dimethyl-L-arginine (SDMA). ADMA is a potent inhibitor of nitric-oxide (NO) synthase, and this activity provides mechanism through which the kidney regulates blood pressure. The polypeptide is Alanine--glyoxylate aminotransferase 2, mitochondrial (Agxt2) (Mus musculus (Mouse)).